Here is a 572-residue protein sequence, read N- to C-terminus: Protein IQ-DOMAIN 30 (572 aa).

Residues 75-96 (SDDEIQVSEVQPTDSQDVASVP) are disordered. Residues 82–92 (SEVQPTDSQDV) show a composition bias toward polar residues. IQ domains lie at 108 to 136 (QEIAAVTVQAAYRGYLARRAFKILKGIIR) and 137 to 154 (LQALIRGHMVRRQAVSTL). A calmodulin-binding region spans residues 159–178 (GIVRLQALARGREIRHSDIG). Disordered regions lie at residues 282 to 332 (RPKK…MDNP) and 399 to 572 (IQTH…EWKR). Polar residues-rich tracts occupy residues 291 to 305 (PSSNLDNSSVAQTSS) and 400 to 419 (QTHTPLGTNESLDSTLVNQI). A compositionally biased stretch (basic and acidic residues) spans 428–455 (AEEKEDVKEERTPKQNHKENSAGKENQK). Polar residues-rich tracts occupy residues 459 to 493 (KASSVTATQTAEFQESGNGNQTSSPGIPSYMQATK), 502 to 514 (QGSSSPRQLGTTE), and 522 to 560 (LPSSGNSAKITSHSPKTRVSNSSGKSGNKTEKTLLSSRE).

This sequence belongs to the IQD family. As to quaternary structure, binds to multiple calmodulin (CaM) in the presence of Ca(2+) and CaM-like proteins.

The protein localises to the nucleus envelope. The protein resides in the cytoplasm. It is found in the cytoskeleton. May be involved in cooperative interactions with calmodulins or calmodulin-like proteins. Recruits calmodulin proteins to microtubules, thus being a potential scaffold in cellular signaling and trafficking. May associate with nucleic acids and regulate gene expression at the transcriptional or post-transcriptional level. The chain is Protein IQ-DOMAIN 30 from Arabidopsis thaliana (Mouse-ear cress).